Reading from the N-terminus, the 399-residue chain is Elongation factor Tu (399 aa).

The tr-type G domain maps to 10–208 (KPHVNIGTIG…TVDSYIPEPE (199 aa)). Residues 19 to 26 (GHVDHGKT) form a G1 region. 19 to 26 (GHVDHGKT) contacts GTP. Residue threonine 26 coordinates Mg(2+). The interval 64–68 (GITIN) is G2. The interval 85–88 (DAPG) is G3. Residues 85–89 (DAPGH) and 140–143 (NKVD) contribute to the GTP site. The segment at 140–143 (NKVD) is G4. Residues 178-180 (SAL) form a G5 region.

It belongs to the TRAFAC class translation factor GTPase superfamily. Classic translation factor GTPase family. EF-Tu/EF-1A subfamily. In terms of assembly, monomer.

Its subcellular location is the cytoplasm. The enzyme catalyses GTP + H2O = GDP + phosphate + H(+). Functionally, GTP hydrolase that promotes the GTP-dependent binding of aminoacyl-tRNA to the A-site of ribosomes during protein biosynthesis. This Streptococcus pyogenes serotype M12 (strain MGAS2096) protein is Elongation factor Tu.